Reading from the N-terminus, the 117-residue chain is Movement protein TGB2 (117 aa).

Residues 1-11 (MPLIPPPNPQK) are Cytoplasmic-facing. A helical membrane pass occupies residues 12–32 (TYQIAVLALGLVLLLAFVLIS). Residues 33 to 78 (DHSPKVGDHLHNLPFGGEYKDGTKTIKYFQRPNQHSLSKTLAKSHN) are Lumenal-facing. Residues 79-99 (TTIFLIILGLIGTLHGLHYFS) traverse the membrane as a helical segment. Over 100–117 (NNRRISSSLHCVLCQNKH) the chain is Cytoplasmic.

The protein belongs to the Tymovirales TGBp2 protein family.

It is found in the host endoplasmic reticulum membrane. Plays a role in viral cell-to-cell propagation, by facilitating genome transport to neighboring plant cells through plasmosdesmata,. The polypeptide is Movement protein TGB2 (Trifolium (WCMV)).